A 412-amino-acid polypeptide reads, in one-letter code: Acetate kinase (412 aa).

N10 contributes to the Mg(2+) binding site. ATP is bound at residue K17. A disordered region spans residues 40 to 61; sequence ETSRLAHTPSAGGGAEPRERTG. A substrate-binding site is contributed by R95. D152 serves as the catalytic Proton donor/acceptor. ATP-binding positions include 212–216, 286–288, and 334–338; these read HLGNG, DMR, and GVGEN. Position 388 (E388) interacts with Mg(2+).

It belongs to the acetokinase family. As to quaternary structure, homodimer. It depends on Mg(2+) as a cofactor. Requires Mn(2+) as cofactor.

The protein resides in the cytoplasm. It catalyses the reaction acetate + ATP = acetyl phosphate + ADP. It participates in metabolic intermediate biosynthesis; acetyl-CoA biosynthesis; acetyl-CoA from acetate: step 1/2. Its function is as follows. Catalyzes the formation of acetyl phosphate from acetate and ATP. Can also catalyze the reverse reaction. This Streptomyces griseus subsp. griseus (strain JCM 4626 / CBS 651.72 / NBRC 13350 / KCC S-0626 / ISP 5235) protein is Acetate kinase.